Consider the following 293-residue polypeptide: 4-hydroxybenzoate octaprenyltransferase (293 aa).

The next 8 helical transmembrane spans lie at 19 to 39 (PIGI…ASNG), 43 to 63 (WLIL…GCVV), 95 to 115 (LLAA…NALV), 135 to 155 (FFAI…PMSY), 158 to 178 (LWGE…FWAI), 209 to 229 (LTAI…VGAL), 231 to 251 (DFSG…VYHL), and 266 to 286 (FLHN…HFLL).

This sequence belongs to the UbiA prenyltransferase family. Requires Mg(2+) as cofactor.

The protein resides in the cell inner membrane. The enzyme catalyses all-trans-octaprenyl diphosphate + 4-hydroxybenzoate = 4-hydroxy-3-(all-trans-octaprenyl)benzoate + diphosphate. Its pathway is cofactor biosynthesis; ubiquinone biosynthesis. Catalyzes the prenylation of para-hydroxybenzoate (PHB) with an all-trans polyprenyl group. Mediates the second step in the final reaction sequence of ubiquinone-8 (UQ-8) biosynthesis, which is the condensation of the polyisoprenoid side chain with PHB, generating the first membrane-bound Q intermediate 3-octaprenyl-4-hydroxybenzoate. The sequence is that of 4-hydroxybenzoate octaprenyltransferase from Thiobacillus denitrificans (strain ATCC 25259 / T1).